The following is a 104-amino-acid chain: Probable RNA-binding protein PA4753 (104 aa).

The 97-residue stretch at methionine 1–asparagine 97 folds into the CRM domain.

In Pseudomonas aeruginosa (strain ATCC 15692 / DSM 22644 / CIP 104116 / JCM 14847 / LMG 12228 / 1C / PRS 101 / PAO1), this protein is Probable RNA-binding protein PA4753.